The primary structure comprises 1342 residues: DNA-directed RNA polymerase subunit beta (1342 aa).

Belongs to the RNA polymerase beta chain family. The RNAP catalytic core consists of 2 alpha, 1 beta, 1 beta' and 1 omega subunit. When a sigma factor is associated with the core the holoenzyme is formed, which can initiate transcription.

The catalysed reaction is RNA(n) + a ribonucleoside 5'-triphosphate = RNA(n+1) + diphosphate. Its function is as follows. DNA-dependent RNA polymerase catalyzes the transcription of DNA into RNA using the four ribonucleoside triphosphates as substrates. The protein is DNA-directed RNA polymerase subunit beta of Klebsiella pneumoniae (strain 342).